A 416-amino-acid polypeptide reads, in one-letter code: Serine hydroxymethyltransferase (416 aa).

Residues L118 and 122 to 124 contribute to the (6S)-5,6,7,8-tetrahydrofolate site; that span reads GHL. K226 carries the post-translational modification N6-(pyridoxal phosphate)lysine. Residues E242 and 350 to 352 each bind (6S)-5,6,7,8-tetrahydrofolate; that span reads SPF.

Belongs to the SHMT family. As to quaternary structure, homodimer. The cofactor is pyridoxal 5'-phosphate.

It localises to the cytoplasm. It carries out the reaction (6R)-5,10-methylene-5,6,7,8-tetrahydrofolate + glycine + H2O = (6S)-5,6,7,8-tetrahydrofolate + L-serine. Its pathway is one-carbon metabolism; tetrahydrofolate interconversion. It participates in amino-acid biosynthesis; glycine biosynthesis; glycine from L-serine: step 1/1. Its function is as follows. Catalyzes the reversible interconversion of serine and glycine with tetrahydrofolate (THF) serving as the one-carbon carrier. This reaction serves as the major source of one-carbon groups required for the biosynthesis of purines, thymidylate, methionine, and other important biomolecules. Also exhibits THF-independent aldolase activity toward beta-hydroxyamino acids, producing glycine and aldehydes, via a retro-aldol mechanism. The polypeptide is Serine hydroxymethyltransferase (Wolinella succinogenes (strain ATCC 29543 / DSM 1740 / CCUG 13145 / JCM 31913 / LMG 7466 / NCTC 11488 / FDC 602W) (Vibrio succinogenes)).